The chain runs to 890 residues: Putative RNA-binding protein 15B (890 aa).

A disordered region spans residues 1–133; that stretch reads MKRQSERDSS…AEPACPGSSA (133 aa). Low complexity predominate over residues 10 to 20; sequence SPSGRGSSSSA. Composition is skewed to basic and acidic residues over residues 22–34 and 66–78; these read RPRE…EAGG and GHRD…DANH. Residues 86-99 show a composition bias toward gly residues; sequence SGSGAGGGGRGGKA. A phosphoserine mark is found at Ser109 and Ser113. Residues 113 to 124 are compositionally biased toward pro residues; the sequence is SPLPPPPPPPGA. An RRM 1 domain is found at 139–219; the sequence is KTLLISSLSP…RPLKVEPVYL (81 aa). Residue Lys213 forms a Glycyl lysine isopeptide (Lys-Gly) (interchain with G-Cter in SUMO2) linkage. Residues 219 to 253 form a disordered region; the sequence is LRGGGGSSRRSSSSSAAASTPPPGPPAPADPLGYL. Over residues 226–237 the composition is skewed to low complexity; it reads SRRSSSSSAAAS. The span at 238–247 shows a compositional bias: pro residues; the sequence is TPPPGPPAPA. A phosphoserine mark is found at Ser265 and Ser267. RRM domains are found at residues 337–414 and 418–492; these read RNLF…YGKA and TRLW…FAKA. A Phosphothreonine modification is found at Thr532. The segment at 547–705 is disordered; sequence EGDWTSPSKS…KPLEEPKHET (159 aa). Phosphoserine occurs at positions 552, 556, and 562. Basic and acidic residues-rich tracts occupy residues 573–616 and 626–646; these read RSGE…ERSR and RGSD…EGTK. The Nuclear localization signal signature appears at 593–597; it reads RRKRR. A compositionally biased stretch (low complexity) spans 647 to 657; that stretch reads ESSSNSLSNSR. Residues 671–703 are compositionally biased toward basic and acidic residues; the sequence is EAADSSHGKKARDSERNHRTTEAEPKPLEEPKH. A Glycyl lysine isopeptide (Lys-Gly) (interchain with G-Cter in SUMO2) cross-link involves residue Lys702. Residues 711 to 889 form the SPOC domain; it reads LSEYAQTLQL…HMVIVIVRDT (179 aa). The segment at 722–890 is interaction with Epstein-Barr virus BMLF1; that stretch reads WNGLLVLKNS…MVIVIVRDTA (169 aa).

This sequence belongs to the RRM Spen family. Component of the WMM complex, a N6-methyltransferase complex composed of a catalytic subcomplex, named MAC, and of an associated subcomplex, named MACOM. The MAC subcomplex is composed of METTL3 and METTL14. The MACOM subcomplex is composed of WTAP, ZC3H13, CBLL1/HAKAI, VIRMA, and, in some cases of RBM15 (RBM15 or RBM15B). May interact with NCOR2. Interacts with NXF1, the interaction is required to promote mRNA export. In terms of assembly, (Microbial infection) Interacts (via the SPOC domain) with Epstein-Barr virus BMLF1 (via the N-terminus); the interaction is direct. Ubiquitously expressed.

Its subcellular location is the nucleus. The protein localises to the nucleoplasm. It is found in the nucleus speckle. It localises to the nucleus envelope. RNA-binding protein that acts as a key regulator of N6-methyladenosine (m6A) methylation of RNAs, thereby regulating different processes, such as alternative splicing of mRNAs and X chromosome inactivation mediated by Xist RNA. Associated component of the WMM complex, a complex that mediates N6-methyladenosine (m6A) methylation of RNAs, a modification that plays a role in the efficiency of mRNA splicing and RNA processing. Plays a key role in m6A methylation, possibly by binding target RNAs and recruiting the WMM complex. Involved in random X inactivation mediated by Xist RNA: acts by binding Xist RNA and recruiting the WMM complex, which mediates m6A methylation, leading to target YTHDC1 reader on Xist RNA and promoting transcription repression activity of Xist. Functions in the regulation of alternative or illicit splicing, possibly by regulating m6A methylation. Inhibits pre-mRNA splicing. Also functions as a mRNA export factor by acting as a cofactor for the nuclear export receptor NXF1. The polypeptide is Putative RNA-binding protein 15B (Homo sapiens (Human)).